The primary structure comprises 91 residues: Movement protein TGBp3 (91 aa).

Over 1-23 (MLGTRNIPTTSGLPLPPPSSSLS) the chain is Lumenal. Residues 24–46 (AYIFPTILAIIFAVFALVAIHIT) form a helical membrane-spanning segment. Over 47-91 (TPEPFCTIHIDGASITITNCPDPAAILNKVAIGPWRGLSYHNNLK) the chain is Cytoplasmic.

The protein belongs to the Tymovirales TGBp3 protein family.

The protein resides in the host endoplasmic reticulum membrane. In terms of biological role, plays a role in viral cell-to-cell propagation, by facilitating genome transport to neighboring plant cells through plasmosdesmata. May induce the formation of granular vesicles derived from the Endoplasmic reticulum, which align on actin filaments. This is Movement protein TGBp3 from Cymbidium mosaic virus (strain Singapore).